We begin with the raw amino-acid sequence, 872 residues long: Valine--tRNA ligase (872 aa).

Positions 49 to 59 (PNVTGILHIGH) match the 'HIGH' region motif. The 'KMSKS' region signature appears at 531 to 535 (KMSKS). Lys534 provides a ligand contact to ATP. Positions 810–871 (PLIARLKKQL…IQQELDLLEQ (62 aa)) form a coiled coil.

Belongs to the class-I aminoacyl-tRNA synthetase family. ValS type 1 subfamily. In terms of assembly, monomer.

It is found in the cytoplasm. It carries out the reaction tRNA(Val) + L-valine + ATP = L-valyl-tRNA(Val) + AMP + diphosphate. Its function is as follows. Catalyzes the attachment of valine to tRNA(Val). As ValRS can inadvertently accommodate and process structurally similar amino acids such as threonine, to avoid such errors, it has a 'posttransfer' editing activity that hydrolyzes mischarged Thr-tRNA(Val) in a tRNA-dependent manner. The polypeptide is Valine--tRNA ligase (Helicobacter pylori (strain J99 / ATCC 700824) (Campylobacter pylori J99)).